Consider the following 289-residue polypeptide: GTPase Era (289 aa).

Residues 2 to 167 enclose the Era-type G domain; sequence KSGFVSLIGR…LREIAKLLPE (166 aa). The segment at 10-17 is G1; it reads GRTNAGKS. GTP is bound at residue 10–17; that stretch reads GRTNAGKS. The tract at residues 36–40 is G2; sequence NATRR. The tract at residues 57 to 60 is G3; sequence DTPG. GTP-binding positions include 57-61 and 116-119; these read DTPGL and TKTD. The tract at residues 116 to 119 is G4; that stretch reads TKTD. Residues 146 to 148 are G5; sequence VNI. The KH type-2 domain occupies 186–274; the sequence is YRDFILESVY…HLNLQIFVKK (89 aa).

It belongs to the TRAFAC class TrmE-Era-EngA-EngB-Septin-like GTPase superfamily. Era GTPase family. Monomer.

The protein localises to the cytoplasm. The protein resides in the cell inner membrane. An essential GTPase that binds both GDP and GTP, with rapid nucleotide exchange. Plays a role in 16S rRNA processing and 30S ribosomal subunit biogenesis and possibly also in cell cycle regulation and energy metabolism. The polypeptide is GTPase Era (Campylobacter hominis (strain ATCC BAA-381 / DSM 21671 / CCUG 45161 / LMG 19568 / NCTC 13146 / CH001A)).